The following is a 331-amino-acid chain: Thioredoxin-like fold domain-containing protein MRL7, chloroplastic (331 aa).

The N-terminal 59 residues, 1-59 (MSFFAVACSAPRSSMLLTGLNSSFSDMHRSPLFVFPVTISSRSVKRFAAVSSDSVLDPE), are a transit peptide targeting the chloroplast. Disordered stretches follow at residues 52 to 105 (SDSV…ADAV) and 141 to 160 (GVDE…EDPD). Positions 142-160 (VDEEEEEEEEMVVEEEDPD) are enriched in acidic residues.

As to quaternary structure, component of the transcriptionally active chromosome (TAC) complexes. Interacts with FSD2 and PRDA1. Interacts with FSD3 and CITRX/TRXZ. Binds to PTAC12/HMR/PAP5. In terms of tissue distribution, expressed in leaves, shoots, stems, cauline leaves, flower buds, flowers and siliques.

Its subcellular location is the plastid. The protein localises to the chloroplast. It is found in the chloroplast stroma. It localises to the chloroplast nucleoid. The protein resides in the nucleus. In terms of biological role, plays an essential role in early steps of chloroplast development. Involved in the regulation of plastid gene expression. May positively regulate plastid-encoded RNA polymerase (PEP) activity through binding to FSD3 and CITRX/TRXZ. Involved in redox-mediated regulation of chloroplast development. Possesses disulfide reductase activity in vitro. Required for the proper function of the plastid transcriptional machinery and protein accumulation in thylakoid membranes. May function as molecular chaperone to ensure proper organization of the nucleoids in chloroplasts. May mediate some aspect of thylakoid structure or function that controls non-photochemical quenching (NPQ). Participates in the early light signaling events of photobody biogenesis in chloroplasts. May mediate the degradation of two repressors of chloroplast biogenesis, PIF1 and PIF3 in nucleus. Collaboratively with PTAC12/HMR/PAP5, involved in the regulation of thermoresponsive responses via the stabilization of PIF4 in the daytime to initiate thermomorphogenesis. The polypeptide is Thioredoxin-like fold domain-containing protein MRL7, chloroplastic (Arabidopsis thaliana (Mouse-ear cress)).